Reading from the N-terminus, the 32-residue chain is Mu-theraphotoxin-Se1a (32 aa).

Intrachain disulfides connect cysteine 2–cysteine 17, cysteine 9–cysteine 22, and cysteine 16–cysteine 28.

This sequence belongs to the neurotoxin 10 (Hwtx-1) family. Expressed by the venom gland.

It is found in the secreted. Voltage-gated sodium channel Nav1.7/SCN9A inhibitor. This chain is Mu-theraphotoxin-Se1a, found in Selenocosmia effera (Tarantula spider).